The sequence spans 349 residues: 4-hydroxy-tetrahydrodipicolinate reductase 2, chloroplastic (349 aa).

The transit peptide at M1–V53 directs the protein to the chloroplast. Residues G81–M86, G173–T175, and S196–M199 each bind NAD(+). The active-site Proton donor/acceptor is H232. The active-site Proton donor is the K236. Residue G241 to T242 participates in (S)-2,3,4,5-tetrahydrodipicolinate binding.

The protein belongs to the DapB family.

The protein localises to the plastid. Its subcellular location is the chloroplast. The enzyme catalyses (S)-2,3,4,5-tetrahydrodipicolinate + NAD(+) + H2O = (2S,4S)-4-hydroxy-2,3,4,5-tetrahydrodipicolinate + NADH + H(+). It carries out the reaction (S)-2,3,4,5-tetrahydrodipicolinate + NADP(+) + H2O = (2S,4S)-4-hydroxy-2,3,4,5-tetrahydrodipicolinate + NADPH + H(+). It participates in amino-acid biosynthesis; L-lysine biosynthesis via DAP pathway; (S)-tetrahydrodipicolinate from L-aspartate: step 4/4. Its function is as follows. Catalyzes the conversion of 4-hydroxy-tetrahydrodipicolinate (HTPA) to tetrahydrodipicolinate. The polypeptide is 4-hydroxy-tetrahydrodipicolinate reductase 2, chloroplastic (DAPB2) (Arabidopsis thaliana (Mouse-ear cress)).